Consider the following 412-residue polypeptide: Serine hydroxymethyltransferase (412 aa).

Residues leucine 117 and glycine 121–leucine 123 each bind (6S)-5,6,7,8-tetrahydrofolate. Lysine 226 bears the N6-(pyridoxal phosphate)lysine mark. (6S)-5,6,7,8-tetrahydrofolate-binding positions include glutamate 242 and serine 350–phenylalanine 352.

It belongs to the SHMT family. Homodimer. The cofactor is pyridoxal 5'-phosphate.

The protein localises to the cytoplasm. It carries out the reaction (6R)-5,10-methylene-5,6,7,8-tetrahydrofolate + glycine + H2O = (6S)-5,6,7,8-tetrahydrofolate + L-serine. It functions in the pathway one-carbon metabolism; tetrahydrofolate interconversion. The protein operates within amino-acid biosynthesis; glycine biosynthesis; glycine from L-serine: step 1/1. Its function is as follows. Catalyzes the reversible interconversion of serine and glycine with tetrahydrofolate (THF) serving as the one-carbon carrier. Also exhibits THF-independent aldolase activity toward beta-hydroxyamino acids, producing glycine and aldehydes, via a retro-aldol mechanism. The chain is Serine hydroxymethyltransferase from Methanosarcina acetivorans (strain ATCC 35395 / DSM 2834 / JCM 12185 / C2A).